A 255-amino-acid chain; its full sequence is Glutamate racemase (255 aa).

Substrate is bound by residues 7 to 8 (DS) and 39 to 40 (YG). C70 (proton donor/acceptor) is an active-site residue. Residue 71-72 (NT) coordinates substrate. C181 functions as the Proton donor/acceptor in the catalytic mechanism. Substrate is bound at residue 182-183 (TH).

Belongs to the aspartate/glutamate racemases family. In terms of assembly, homodimer.

The enzyme catalyses L-glutamate = D-glutamate. Its pathway is cell wall biogenesis; peptidoglycan biosynthesis. In terms of biological role, provides the (R)-glutamate required for cell wall biosynthesis. This Helicobacter pylori (strain J99 / ATCC 700824) (Campylobacter pylori J99) protein is Glutamate racemase.